We begin with the raw amino-acid sequence, 98 residues long: Large ribosomal subunit protein eL21 (98 aa).

The disordered stretch occupies residues 1-22 (MVQMSEGFRRKTRKKLSKHPRE). Residues 10-21 (RKTRKKLSKHPR) are compositionally biased toward basic residues.

This sequence belongs to the eukaryotic ribosomal protein eL21 family.

The sequence is that of Large ribosomal subunit protein eL21 (rpl21e) from Methanocaldococcus jannaschii (strain ATCC 43067 / DSM 2661 / JAL-1 / JCM 10045 / NBRC 100440) (Methanococcus jannaschii).